We begin with the raw amino-acid sequence, 295 residues long: Xyloglucan endotransglucosylase protein 2 (295 aa).

The N-terminal stretch at Met1–Gly23 is a signal peptide. Residues Ala24 to Tyr222 enclose the GH16 domain. Glu108 (nucleophile) is an active-site residue. Residue Glu112 is the Proton donor of the active site. Glu112 serves as a coordination point for xyloglucan. Asn116 carries an N-linked (GlcNAc...) asparagine glycan. Xyloglucan contacts are provided by residues Gln125–Asn127, Asp135–Glu137, Asp201–Trp202, and Gly206. Disulfide bonds link Cys230–Cys239 and Cys276–Cys289. Position 281 (Arg281) interacts with xyloglucan.

Belongs to the glycosyl hydrolase 16 family. XTH group 1 subfamily. In terms of processing, contains at least one intrachain disulfide bond essential for its enzymatic activity. As to expression, expressed in fruit pulp.

It is found in the secreted. It localises to the cell wall. The protein localises to the extracellular space. The protein resides in the apoplast. The catalysed reaction is breaks a beta-(1-&gt;4) bond in the backbone of a xyloglucan and transfers the xyloglucanyl segment on to O-4 of the non-reducing terminal glucose residue of an acceptor, which can be a xyloglucan or an oligosaccharide of xyloglucan.. Catalyzes xyloglucan endotransglycosylation (XET). Cleaves and religates xyloglucan polymers. Does not catalyze xyloglucan endohydrolysis (XEH). Probably involved in cell wall restructuring during fruit ripening and postharvest fruit softening. This Diospyros kaki (Kaki persimmon) protein is Xyloglucan endotransglucosylase protein 2.